We begin with the raw amino-acid sequence, 128 residues long: uncharacterized protein (128 aa).

This is an uncharacterized protein from Gallus gallus (Chicken).